Here is a 511-residue protein sequence, read N- to C-terminus: Sterol 14-alpha demethylase resB (511 aa).

Residues 3–23 (ILWIVAYALLAFAASIALNLV) traverse the membrane as a helical segment. C451 provides a ligand contact to heme.

The protein belongs to the cytochrome P450 family. The cofactor is heme.

The protein localises to the membrane. The enzyme catalyses a 14alpha-methyl steroid + 3 reduced [NADPH--hemoprotein reductase] + 3 O2 = a Delta(14) steroid + formate + 3 oxidized [NADPH--hemoprotein reductase] + 4 H2O + 4 H(+). It catalyses the reaction a 14alpha-methyl steroid + reduced [NADPH--hemoprotein reductase] + O2 = a 14alpha-hydroxymethyl steroid + oxidized [NADPH--hemoprotein reductase] + H2O + H(+). It carries out the reaction a 14alpha-hydroxymethyl steroid + reduced [NADPH--hemoprotein reductase] + O2 = a 14alpha-formyl steroid + oxidized [NADPH--hemoprotein reductase] + 2 H2O + H(+). The catalysed reaction is a 14alpha-formyl steroid + reduced [NADPH--hemoprotein reductase] + O2 = a Delta(14) steroid + formate + oxidized [NADPH--hemoprotein reductase] + H2O + 2 H(+). The enzyme catalyses lanosterol + 3 reduced [NADPH--hemoprotein reductase] + 3 O2 = 4,4-dimethyl-5alpha-cholesta-8,14,24-trien-3beta-ol + formate + 3 oxidized [NADPH--hemoprotein reductase] + 4 H2O + 4 H(+). It catalyses the reaction lanosterol + reduced [NADPH--hemoprotein reductase] + O2 = 32-hydroxylanosterol + oxidized [NADPH--hemoprotein reductase] + H2O + H(+). It carries out the reaction 32-hydroxylanosterol + reduced [NADPH--hemoprotein reductase] + O2 = 32-oxolanosterol + oxidized [NADPH--hemoprotein reductase] + 2 H2O + H(+). The catalysed reaction is 32-oxolanosterol + reduced [NADPH--hemoprotein reductase] + O2 = 4,4-dimethyl-5alpha-cholesta-8,14,24-trien-3beta-ol + formate + oxidized [NADPH--hemoprotein reductase] + H2O + 2 H(+). The enzyme catalyses eburicol + 3 reduced [NADPH--hemoprotein reductase] + 3 O2 = 14-demethyleburicol + formate + 3 oxidized [NADPH--hemoprotein reductase] + 4 H2O + 4 H(+). It catalyses the reaction eburicol + reduced [NADPH--hemoprotein reductase] + O2 = 32-hydroxyeburicol + oxidized [NADPH--hemoprotein reductase] + H2O + H(+). It carries out the reaction 32-hydroxyeburicol + reduced [NADPH--hemoprotein reductase] + O2 = 32-oxoeburicol + oxidized [NADPH--hemoprotein reductase] + 2 H2O + H(+). The catalysed reaction is 32-oxoeburicol + reduced [NADPH--hemoprotein reductase] + O2 = 14-demethyleburicol + formate + oxidized [NADPH--hemoprotein reductase] + H2O + 2 H(+). Sterol 14-alpha demethylase; part of the gene cluster that mediates the biosynthesis of the tetrahydropyranyl antifungal agent restricticin that acts as an inhibitor of CYP51 and blocks the ergosterol biosynthesis. Sterol 14-alpha-demethylase plays a critical role in the biosynthesis of ergosterol, the major sterol component in fungal membranes that participates in a variety of functions. ResB acts as a self-resistant CYP51 that contains mutations found in CYP51s isolated from azole resistance strains and that is not inhibited by the final product of the cluster, restricticin. This is Sterol 14-alpha demethylase resB from Aspergillus sclerotiorum.